Here is a 93-residue protein sequence, read N- to C-terminus: Pyrimidine/purine nucleoside phosphorylase (93 aa).

It belongs to the nucleoside phosphorylase PpnP family.

It carries out the reaction a purine D-ribonucleoside + phosphate = a purine nucleobase + alpha-D-ribose 1-phosphate. It catalyses the reaction adenosine + phosphate = alpha-D-ribose 1-phosphate + adenine. The enzyme catalyses cytidine + phosphate = cytosine + alpha-D-ribose 1-phosphate. The catalysed reaction is guanosine + phosphate = alpha-D-ribose 1-phosphate + guanine. It carries out the reaction inosine + phosphate = alpha-D-ribose 1-phosphate + hypoxanthine. It catalyses the reaction thymidine + phosphate = 2-deoxy-alpha-D-ribose 1-phosphate + thymine. The enzyme catalyses uridine + phosphate = alpha-D-ribose 1-phosphate + uracil. The catalysed reaction is xanthosine + phosphate = alpha-D-ribose 1-phosphate + xanthine. Catalyzes the phosphorolysis of diverse nucleosides, yielding D-ribose 1-phosphate and the respective free bases. Can use uridine, adenosine, guanosine, cytidine, thymidine, inosine and xanthosine as substrates. Also catalyzes the reverse reactions. The sequence is that of Pyrimidine/purine nucleoside phosphorylase from Shewanella halifaxensis (strain HAW-EB4).